We begin with the raw amino-acid sequence, 216 residues long: MOB kinase activator 3C (216 aa).

Zn(2+) is bound by residues C82, C87, H164, and H169.

It belongs to the MOB1/phocein family.

In terms of biological role, may regulate the activity of kinases. The protein is MOB kinase activator 3C (Mob3c) of Mus musculus (Mouse).